The chain runs to 690 residues: NF-kappa-B-repressing factor (690 aa).

The tract at residues 1-296 (MEKILQMAEG…FKHTFGEDLV (296 aa)) is active repression domain. A Nuclear localization signal motif is present at residues 25–45 (KPSKGQKRHLSTCDGQNPPKK). Disordered regions lie at residues 27 to 87 (SKGQ…NEQT) and 132 to 163 (MYFDSGNPAPSTTSQQANSQSTPEPSPSQTFP). Lysine 68 participates in a covalent cross-link: Glycyl lysine isopeptide (Lys-Gly) (interchain with G-Cter in SUMO2). The span at 142-163 (STTSQQANSQSTPEPSPSQTFP) shows a compositional bias: low complexity. A DNA-binding region spans residues 296–388 (VVCQIGMSSY…RVFLQDHCLA (93 aa)). The span at 414–431 (PTYPSVKSSQCHTGSSPR) shows a compositional bias: polar residues. Positions 414–437 (PTYPSVKSSQCHTGSSPRGSGKKK) are disordered. A Glycyl lysine isopeptide (Lys-Gly) (interchain with G-Cter in SUMO2) cross-link involves residue lysine 500. The 46-residue stretch at 551–596 (EDNIGNQLLRKMGWTGGGLGKSGEGIREPISVKEQHKREGLGLDVE) folds into the G-patch domain. The R3H domain occupies 600–664 (KIAKRDIEQI…DRYLVVGRKR (65 aa)). Position 618 is a phosphoserine (serine 618). Glycyl lysine isopeptide (Lys-Gly) (interchain with G-Cter in SUMO2) cross-links involve residues lysine 666 and lysine 674.

Interacts with NF-kappa-B. Interacts with XRN2. Interacts (via G-patch domain) with DHX15; promoting the RNA helicase activity of DHX15. As to expression, widely and constitutively expressed. Expressed at lower level in colon, peripheral blood lymphocytes, lung and kidney.

The protein resides in the nucleus. The protein localises to the nucleolus. Enhances the ATPase activity of DHX15 by acting like a brace that tethers mobile sections of DHX15 together, stabilizing a functional conformation with high RNA affinity of DHX15. Involved in the constitutive silencing of the interferon beta promoter, independently of the virus-induced signals, and in the inhibition of the basal and cytokine-induced iNOS promoter activity. Also involved in the regulation of IL-8 transcription. May also act as a DNA-binding transcription regulator: interacts with a specific negative regulatory element (NRE) 5'-AATTCCTCTGA-3' to mediate transcriptional repression of certain NK-kappa-B responsive genes. This is NF-kappa-B-repressing factor from Homo sapiens (Human).